The following is a 646-amino-acid chain: uncharacterized protein (646 aa).

10 consecutive transmembrane segments (helical) span residues 20–40 (AYFLSCVFAVSVFFVFTSFIF), 54–74 (LVKTCLSAALVVIIVFCIFFI), 115–135 (LAAIAAGIGAGLLFSKLFFMI), 154–174 (AFVMTIAGFLILFQTLLILSL), 203–223 (TVLSLLCLGSGYYLSATANAI), 232–252 (ILILVLIGTYFFFTQSSVAFF), 285–305 (LFLTSVITAVILTATGVIYMF), 523–543 (GVALMLFIGLFVSVLFFIVQG), 582–602 (IGFLFFIPFIAGTIHAGFAYA), and 613–633 (FLEAVIVIFIYFVFQALYYIV).

This sequence belongs to the ABC-4 integral membrane protein family.

The protein localises to the cell membrane. This is an uncharacterized protein from Bacillus subtilis (strain 168).